A 345-amino-acid chain; its full sequence is Splicing factor YJU2 (345 aa).

Residues cysteine 43, cysteine 46, cysteine 80, and cysteine 83 each coordinate Zn(2+). Residues 205 to 345 (KRLRDSDSEE…YSDSDDSSSD (141 aa)) are disordered. The segment covering 217–232 (ENAKERSKKHIADKPT) has biased composition (basic and acidic residues). Composition is skewed to low complexity over residues 308 to 317 (SSITSSSASS) and 327 to 337 (GSSLGLLGAYS).

This sequence belongs to the CWC16 family. YJU2 subfamily. In terms of assembly, component of the spliceosome. Present in the activated B complex, the catalytically activated B* complex which catalyzes the branching, the catalytic step 1 C complex catalyzing the exon ligation, and the postcatalytic P complex containing the ligated exons (mRNA) and the excised lariat intron.

The protein resides in the nucleus. Functionally, part of the spliceosome which catalyzes two sequential transesterification reactions, first the excision of the non-coding intron from pre-mRNA and then the ligation of the coding exons to form the mature mRNA. Plays a role in stabilizing the structure of the spliceosome catalytic core and docking of the branch helix into the active site, producing 5'-exon and lariat intron-3'-intermediates. May protect cells from TP53-dependent apoptosis upon dsDNA break damage through association with PRP19-CD5L complex. The protein is Splicing factor YJU2 of Danio rerio (Zebrafish).